Consider the following 410-residue polypeptide: Arginine deiminase (410 aa).

Residue Cys398 is the Amidino-cysteine intermediate of the active site.

It belongs to the arginine deiminase family. Homodimer.

The protein resides in the cytoplasm. The catalysed reaction is L-arginine + H2O = L-citrulline + NH4(+). Its pathway is amino-acid degradation; L-arginine degradation via ADI pathway; carbamoyl phosphate from L-arginine: step 1/2. This chain is Arginine deiminase (arcA), found in Mycoplasmopsis arginini (Mycoplasma arginini).